We begin with the raw amino-acid sequence, 254 residues long: uncharacterized protein (254 aa).

The next 8 membrane-spanning stretches (helical) occupy residues 41–61 (VFVF…IKII), 64–84 (IFQA…EYFF), 91–111 (IYCG…LYIL), 125–145 (ILIG…FVLA), 146–166 (PAAL…LWSF), 172–192 (FILL…IQLL), 204–224 (MLLA…VLTP), and 232–252 (IIMS…LFLL).

It belongs to the TatC family.

The protein resides in the plastid. The protein localises to the chloroplast membrane. This is an uncharacterized protein from Porphyra purpurea (Red seaweed).